Consider the following 117-residue polypeptide: Large ribosomal subunit protein bL20c (117 aa).

This sequence belongs to the bacterial ribosomal protein bL20 family.

The protein localises to the plastid. It localises to the chloroplast. Its function is as follows. Binds directly to 23S ribosomal RNA and is necessary for the in vitro assembly process of the 50S ribosomal subunit. It is not involved in the protein synthesizing functions of that subunit. This chain is Large ribosomal subunit protein bL20c, found in Platanus occidentalis (Sycamore).